Consider the following 205-residue polypeptide: Proteasome subunit beta type-3 (205 aa).

Phosphoserine is present on serine 31. A Glycyl lysine isopeptide (Lys-Gly) (interchain with G-Cter in ubiquitin) cross-link involves residue lysine 70.

It belongs to the peptidase T1B family. As to quaternary structure, the 26S proteasome consists of a 20S proteasome core and two 19S regulatory subunits. The 20S proteasome core is composed of 28 subunits that are arranged in four stacked rings, resulting in a barrel-shaped structure. The two end rings are each formed by seven alpha subunits, and the two central rings are each formed by seven beta subunits. The catalytic chamber with the active sites is on the inside of the barrel.

It is found in the cytoplasm. It localises to the nucleus. Its function is as follows. Non-catalytic component of the proteasome which degrades poly-ubiquitinated proteins in the cytoplasm and in the nucleus. It is essential for the regulated turnover of proteins and for the removal of misfolded proteins. The proteasome is a multicatalytic proteinase complex that is characterized by its ability to cleave peptides with Arg, Phe, Tyr, Leu, and Glu adjacent to the leaving group at neutral or slightly basic pH. It has an ATP-dependent proteolytic activity. This subunit may participate in the trypsin-like activity of the enzyme complex. This is Proteasome subunit beta type-3 (PUP3) from Saccharomyces cerevisiae (strain ATCC 204508 / S288c) (Baker's yeast).